The sequence spans 168 residues: Cofilin-1-A (168 aa).

A2 carries the post-translational modification N-acetylalanine. Positions 4–153 constitute an ADF-H domain; it reads GVMVSDDVIK…NDPCNLADKL (150 aa). The Nuclear localization signal motif lies at 30 to 34; that stretch reads KKRKK.

It belongs to the actin-binding proteins ADF family. Post-translationally, inactive when phosphorylated. Phosphorylation levels vary during development. Oocytes contain only the phosphorylated form, and 80-95% of cfl1 protein is phosphorylated in unfertilized eggs. Rapid dephosphorylation occurs within 30 minutes after fertilization. Phosphorylation levels increase again between the morula and blastula stages (5-8 hpf) and then decrease again as gastrulation approaches. Dephosphorylated by pdxp. Expressed diffusely in both animal and vegetal hemispheres of the oocyte. During cleavage, expression accumulates around the cleavage furrow, along the vegetal membrane, and later in the midbody. Strongly expressed in the animal hemisphere during blastula stages, with most cells showing expression by gastrulation. By stage 17, expression is highest in cells of the developing neuroectoderm, and at stage 24 the notochord, neural tube, neural crest, somites and some cells of the archenteron show high expression. By stage 35, expression has declined in the notochord, but remains in the neural tube, epidermis and a layer of cells in the archenteron. Also highly expressed in the retina and neuronal cell bodies at the base of the cement gland but not the cement gland itself. At stage 38, expression is widespread, being highest in the nervous system and retina. In the adult, expression is high in the brain, heart, oocyte, stomach, and low in skeletal muscle.

It is found in the nucleus matrix. It localises to the cytoplasm. The protein resides in the cytoskeleton. Its subcellular location is the cell cortex. The protein localises to the membrane. In terms of biological role, may play a role in the regulation of cell morphology and cytoskeletal organization. Binds to F-actin and exhibits pH-sensitive F-actin depolymerizing activity. Required for formation of the cleavage furrow during cytokinesis. This is Cofilin-1-A (cfl1-a) from Xenopus laevis (African clawed frog).